The primary structure comprises 239 residues: Orotidine 5'-phosphate decarboxylase (239 aa).

Residues Asp-12, Lys-34, 61–70 (DLKFHDIPNT), Thr-125, Arg-188, Gln-197, Gly-217, and Arg-218 each bind substrate. Catalysis depends on Lys-63, which acts as the Proton donor.

Belongs to the OMP decarboxylase family. Type 1 subfamily. In terms of assembly, homodimer.

The enzyme catalyses orotidine 5'-phosphate + H(+) = UMP + CO2. It functions in the pathway pyrimidine metabolism; UMP biosynthesis via de novo pathway; UMP from orotate: step 2/2. Functionally, catalyzes the decarboxylation of orotidine 5'-monophosphate (OMP) to uridine 5'-monophosphate (UMP). This chain is Orotidine 5'-phosphate decarboxylase, found in Syntrophomonas wolfei subsp. wolfei (strain DSM 2245B / Goettingen).